A 905-amino-acid chain; its full sequence is Probable cation-transporting ATPase F (905 aa).

Helical transmembrane passes span 84-104, 248-268, and 283-303; these read EFVDAAVIFGVVVINAIVGFI, FSKFLTIAILGLAALTFGVGL, and ALAVGAIPEGLPTAVTITLAI. Aspartate 333 serves as the catalytic 4-aspartylphosphate intermediate. Mg(2+) is bound by residues aspartate 643 and aspartate 647. Helical transmembrane passes span 716-736, 738-758, 778-798, 808-828, 842-862, and 872-892; these read ILAAIAVGVALPILPTQILWI, MTTAIALGLMLAFEPKEAGIM, TLLVSTLLVASAWWLFAWELD, TAALNLFVVVEAFYLFSCRSL, WIILGVSAQAIAQFAITYLPA, and IDIGVWVRIFAVATAITIVVA.

This sequence belongs to the cation transport ATPase (P-type) (TC 3.A.3) family. Type IIA subfamily.

The protein resides in the cell membrane. It catalyses the reaction ATP + H2O = ADP + phosphate + H(+). The sequence is that of Probable cation-transporting ATPase F (ctpF) from Mycobacterium bovis (strain ATCC BAA-935 / AF2122/97).